We begin with the raw amino-acid sequence, 229 residues long: UPF0173 metal-dependent hydrolase RD1_1994 (229 aa).

This sequence belongs to the UPF0173 family.

This chain is UPF0173 metal-dependent hydrolase RD1_1994, found in Roseobacter denitrificans (strain ATCC 33942 / OCh 114) (Erythrobacter sp. (strain OCh 114)).